The primary structure comprises 515 residues: Thioredoxin domain-containing protein 2 (515 aa).

The disordered stretch occupies residues Met-1 to Ser-23. Phosphoserine is present on residues Ser-14 and Ser-39. The interval Thr-51–Val-390 is disordered. Composition is skewed to polar residues over residues Phe-61–Thr-75 and Lys-85–Thr-136. 21 repeat units span residues Gln-92–Lys-106, Gln-107–Thr-121, His-122–Thr-136, His-137–Ile-151, Gln-152–Ile-166, Gln-167–Ile-181, Gln-182–Ile-196, Gln-197–Ile-211, Gln-212–Ile-226, Gln-227–Val-241, Pro-242–Val-256, Gln-257–Val-271, Gln-272–Ile-286, Gln-287–Ile-301, Gln-302–Val-316, Gln-317–Ile-331, Gln-332–Ile-346, Pro-347–Gln-362, Ser-363–Ile-375, Gln-376–Val-390, and Gln-391–Glu-405. The segment at Gln-92 to Glu-405 is 21 X 15 AA approximate tandem repeat of Q-P-K-X-G-D-I-P-K-S-[PS]-E-[KE]-X-I. Composition is skewed to basic and acidic residues over residues His-137 to Val-293 and Gln-302 to Glu-358. Ser-146 carries the phosphoserine modification. A compositionally biased stretch (polar residues) spans Ile-375 to Lys-384. The 118-residue stretch at Leu-398–Lys-515 folds into the Thioredoxin domain. Cys-442 and Cys-445 form a disulfide bridge.

In terms of tissue distribution, testis-specific. Strongly expressed in the testicular seminiferous tubules, mostly in the round spermatids.

It is found in the cytoplasm. Its function is as follows. Probably plays a regulatory role in sperm development. May participate in regulation of fibrous sheath (FS) assembly by supporting the formation of disulfide bonds during sperm tail morphogenesis. May also be required to rectify incorrect disulfide pairing and generate suitable pairs between the FS constituents. Can reduce disulfide bonds in vitro in the presence of NADP and thioredoxin reductase. The polypeptide is Thioredoxin domain-containing protein 2 (Txndc2) (Mus musculus (Mouse)).